A 658-amino-acid chain; its full sequence is MTSIKISSDVFNKYHTNGKLRLSTGYVQEALEKQGYPGHDGVVQILKGKEDIGEQMGHGFTYRIRICDGIFQYNTLVSADIDDQIKREAEHLVEGAIIAITNLSTFSQGAGIKTSFLITGYTLLSRYHQTLSAPEVKPRSHSGNPAEHHGYRPNIVVEDVWPEAESITSEFQENMSNPPAAKMPKRESGGEASHNRVPAPEPHRSRAPPPPARRGPSNTERGVIPIAMVTPYVNNFRIHGMVSRKEDIKNIPAKNMKIFNFEITDSNGDTIRCTAFNETAESFHSTITENLSYYLSGGSVRQANKKFNNTGHDYEITLRNDSVVEAGGELLAAPKLNLKRVSLAEIAGHCGEMIDVLVIVEKMDAEATEFTSKAGKTLTKREMELIDESQALVRLTLWGDEAIKANVDDYHGKVIAFKGVIPREFNGGYSLGTGSGTRIIPVPEISGVSELYDWYTTEKPHSELKLISQTSGGMSEAPRTIAGLQEMQFGKDSDKGDYASVKAMITRINPNSALYKGCASEGCQKKVIESDGEYRCEKCNKSMNKFKWLYMMQFELSDETGQVYVTAFGDSAAKVVGKTAQEVGDLKDENLNEYNATFERLQFVPKMWRLRCKMETYNEEVRQKMTVFSVEEVNQDKYIENLKELIEQMKGIEDEGSY.

Disordered regions lie at residues 134 to 155 and 169 to 222; these read PEVKPRSHSGNPAEHHGYRPNI and SEFQ…TERG. The segment at residues 236–326 is a DNA-binding region (OB); the sequence is FRIHGMVSRK…TLRNDSVVEA (91 aa). Residues 518–539 form a C4-type zinc finger; that stretch reads CASEGCQKKVIESDGEYRCEKC.

Belongs to the replication factor A protein 1 family. Component of the heterotrimeric canonical replication protein A complex (RPA).

It localises to the nucleus. As part of the heterotrimeric replication protein A complex (RPA/RP-A), binds and stabilizes single-stranded DNA intermediates, that form during DNA replication or upon DNA stress. It prevents their reannealing and in parallel, recruits and activates different proteins and complexes involved in DNA metabolism. Thereby, it plays an essential role both in DNA replication and the cellular response to DNA damage. The sequence is that of Probable replication factor A 73 kDa subunit from Caenorhabditis briggsae.